A 128-amino-acid chain; its full sequence is Small ribosomal subunit protein uS11 (128 aa).

The protein belongs to the universal ribosomal protein uS11 family. As to quaternary structure, part of the 30S ribosomal subunit. Interacts with proteins S7 and S18. Binds to IF-3.

Located on the platform of the 30S subunit, it bridges several disparate RNA helices of the 16S rRNA. Forms part of the Shine-Dalgarno cleft in the 70S ribosome. The protein is Small ribosomal subunit protein uS11 of Desulforudis audaxviator (strain MP104C).